The primary structure comprises 620 residues: uncharacterized protein (620 aa).

4 helical membrane-spanning segments follow: residues 66–86, 238–258, 546–566, and 584–604; these read LLNF…NQII, FFDA…NLLW, LGII…VWTI, and IIFI…ILVF.

The protein resides in the cell membrane. This is an uncharacterized protein from Mycoplasma genitalium (strain ATCC 33530 / DSM 19775 / NCTC 10195 / G37) (Mycoplasmoides genitalium).